The chain runs to 253 residues: Indole-3-glycerol phosphate synthase (253 aa).

The protein belongs to the TrpC family.

It catalyses the reaction 1-(2-carboxyphenylamino)-1-deoxy-D-ribulose 5-phosphate + H(+) = (1S,2R)-1-C-(indol-3-yl)glycerol 3-phosphate + CO2 + H2O. Its pathway is amino-acid biosynthesis; L-tryptophan biosynthesis; L-tryptophan from chorismate: step 4/5. The polypeptide is Indole-3-glycerol phosphate synthase (Bacillus cereus (strain ZK / E33L)).